The following is a 195-amino-acid chain: Rubrerythrin-1 (195 aa).

In terms of domain architecture, Ferritin-like diiron spans 3-150 (SLKGTKTAEN…ALLKNIEENK (148 aa)). Fe(3+)-binding residues include Glu-20, Glu-53, Glu-98, Glu-101, Glu-132, His-135, Cys-162, Cys-165, Cys-178, and Cys-181. The Rubredoxin-like domain maps to 157-191 (VKFWKCIKCGYIFEGKTAPKVCPACLHPQAYFEIL).

In terms of assembly, homodimer. The cofactor is Fe(3+).

It catalyses the reaction H2O2 + NADH + H(+) = NAD(+) + 2 H2O. Rubredoxin (Rd) increases the NADH consumption rate by serving as an intermediary electron-transfer shuttle between NROR and RubY. In terms of biological role, functions as the terminal component of an NADH peroxidase (NADH:H(2)O(2) oxidoreductase) when using NADH:rubredoxin oxidoreductase (NROR) as the electron transport intermediary from NADH to RubY. In Clostridium acetobutylicum (strain ATCC 824 / DSM 792 / JCM 1419 / IAM 19013 / LMG 5710 / NBRC 13948 / NRRL B-527 / VKM B-1787 / 2291 / W), this protein is Rubrerythrin-1 (rbr1).